The primary structure comprises 97 residues: Large ribosomal subunit protein uL23 (97 aa).

It belongs to the universal ribosomal protein uL23 family. Part of the 50S ribosomal subunit. Contacts protein L29, and trigger factor when it is bound to the ribosome.

Functionally, one of the early assembly proteins it binds 23S rRNA. One of the proteins that surrounds the polypeptide exit tunnel on the outside of the ribosome. Forms the main docking site for trigger factor binding to the ribosome. This Myxococcus xanthus (strain DK1622) protein is Large ribosomal subunit protein uL23.